We begin with the raw amino-acid sequence, 318 residues long: Acetyl-coenzyme A carboxylase carboxyl transferase subunit alpha (318 aa).

Residues 36–293 (EIDRLKEKST…KTRLSEQLDQ (258 aa)) enclose the CoA carboxyltransferase C-terminal domain.

The protein belongs to the AccA family. As to quaternary structure, acetyl-CoA carboxylase is a heterohexamer composed of biotin carboxyl carrier protein (AccB), biotin carboxylase (AccC) and two subunits each of ACCase subunit alpha (AccA) and ACCase subunit beta (AccD).

Its subcellular location is the cytoplasm. The enzyme catalyses N(6)-carboxybiotinyl-L-lysyl-[protein] + acetyl-CoA = N(6)-biotinyl-L-lysyl-[protein] + malonyl-CoA. The protein operates within lipid metabolism; malonyl-CoA biosynthesis; malonyl-CoA from acetyl-CoA: step 1/1. Functionally, component of the acetyl coenzyme A carboxylase (ACC) complex. First, biotin carboxylase catalyzes the carboxylation of biotin on its carrier protein (BCCP) and then the CO(2) group is transferred by the carboxyltransferase to acetyl-CoA to form malonyl-CoA. The polypeptide is Acetyl-coenzyme A carboxylase carboxyl transferase subunit alpha (Teredinibacter turnerae (strain ATCC 39867 / T7901)).